The sequence spans 259 residues: Thrombin-like enzyme gyroxin B1.7 (259 aa).

An N-terminal signal peptide occupies residues 1–18; that stretch reads MVLIRVLANLLILQLSYA. Residues 19–259 constitute a propeptide that is removed on maturation; it reads QKSSELVIGG…AGNTAVTCPP (241 aa). A Peptidase S1 domain is found at 25–250; that stretch reads VIGGDECNIN…DTEWIQSIIA (226 aa). 5 cysteine pairs are disulfide-bonded: C31/C162, C49/C65, C141/C211, C173/C190, and C201/C226. The active-site Charge relay system is the H64. The N-linked (GlcNAc...) asparagine glycan is linked to N102. Catalysis depends on D109, which acts as the Charge relay system. S205 (charge relay system) is an active-site residue.

The protein belongs to the peptidase S1 family. Snake venom subfamily. Monomer. Expressed by the venom gland.

Its subcellular location is the secreted. Thrombin-like snake venom serine protease. Displays a specificity similar to trypsin. Releases only fibrinopeptide A in the conversion of fibrinogen to fibrin. Shows coagulant, esterase and amidase activities. Reversibly increases the permeability of the blood brain barrier (BBB) in mice. Induces the barrel rotation syndrome in mice, which is manifested by gyroxin-like, rapid rolling motions. This syndrome may be due to its effect on BBB permeability, and certainly also to other actions affecting endogenous substrates present in the endothelium, nervous tissues or blood. This Crotalus durissus terrificus (South American rattlesnake) protein is Thrombin-like enzyme gyroxin B1.7.